Reading from the N-terminus, the 2030-residue chain is Dedicator of cytokinesis protein 3 (2030 aa).

The region spanning 6–67 (EEEKYGVVIC…PANYIHLKKA (62 aa)) is the SH3 domain. Residues 421-599 (RNDLYLTLEK…ESFFISTQLS (179 aa)) form the C2 DOCK-type domain. A DOCKER domain is found at 1228–1635 (KSEINKEEMY…LYHEFPGLDK (408 aa)). 4 disordered regions span residues 1641–1662 (SGTSTPRGNVLASHSPMSPESI), 1734–1771 (SSSQASPSSSSLSSTHSAPSQMITSAPSSARGSPSLPD), 1849–1927 (DTPP…ADED), and 1951–2030 (QPCR…RGEQ). Position 1658 is a phosphoserine (S1658). Residues 1734 to 1754 (SSSQASPSSSSLSSTHSAPSQ) show a composition bias toward low complexity. Residues 1755-1765 (MITSAPSSARG) show a composition bias toward polar residues. Low complexity predominate over residues 1880-1902 (GSNSTLSGSASSGVSSLSESNFG). The span at 1967–1977 (PMDPPALPPKP) shows a compositional bias: pro residues. Positions 1970–1976 (PPALPPK) match the SH3-binding motif. Composition is skewed to basic and acidic residues over residues 1984–2001 (ALEHDEGVLLREETERPR) and 2014–2030 (AKEEQARMAWEHGRGEQ).

This sequence belongs to the DOCK family. As to quaternary structure, interacts with presenilin proteins PSEN1 and PSEN2. Interacts with CRK. In terms of tissue distribution, in normal brains, it is localized in the neuropil, and occasionally in the pyramidal cells, while in Alzheimer disease brains, it is associated with neurofibrillary tangles.

It localises to the cytoplasm. Functionally, potential guanine nucleotide exchange factor (GEF). GEF proteins activate some small GTPases by exchanging bound GDP for free GTP. Its interaction with presenilin proteins as well as its ability to stimulate Tau/MAPT phosphorylation suggest that it may be involved in Alzheimer disease. Ectopic expression in nerve cells decreases the secretion of amyloid-beta APBA1 protein and lowers the rate of cell-substratum adhesion, suggesting that it may affect the function of some small GTPase involved in the regulation of actin cytoskeleton or cell adhesion receptors. The chain is Dedicator of cytokinesis protein 3 (DOCK3) from Homo sapiens (Human).